A 286-amino-acid polypeptide reads, in one-letter code: MYLFRIISLNLSGVFLFLSYTPLYITYLLGVVISSMMLTVGTFAITLDIILCILVVCFLITTLLVIDSVLDSIRGLNSVGVLVRIIQYCFLWFVFSEFMLFVVFFYTLYSECLLINVEFTNIGCPVTTKYSNIILDLGYIFYWFLFDFFNIILNTVYLFISGLCCNNVLSSILCREYLLSKIILGSSIFLGLLFIWNQVWEFNILIITLSVNIFCTILFSIDTLHFMHVLVGIVFMIISIFNIQSKKIGDIRIVLIVCIIFYWHFVDIVWFFLLRFIYLDTLMVLK.

A run of 8 helical transmembrane segments spans residues 13–33, 40–60, 85–105, 133–153, 173–195, 199–221, 223–243, and 253–273; these read GVFL…GVVI, VGTF…CFLI, IIQY…VVFF, IILD…NIIL, LCRE…LLFI, VWEF…LFSI, TLHF…IFNI, and IVLI…WFFL.

It belongs to the cytochrome c oxidase subunit 3 family. As to quaternary structure, component of the cytochrome c oxidase (complex IV, CIV), a multisubunit enzyme composed of a catalytic core of 3 subunits and several supernumerary subunits. The complex exists as a monomer or a dimer and forms supercomplexes (SCs) in the inner mitochondrial membrane with ubiquinol-cytochrome c oxidoreductase (cytochrome b-c1 complex, complex III, CIII).

Its subcellular location is the mitochondrion inner membrane. The enzyme catalyses 4 Fe(II)-[cytochrome c] + O2 + 8 H(+)(in) = 4 Fe(III)-[cytochrome c] + 2 H2O + 4 H(+)(out). In terms of biological role, component of the cytochrome c oxidase, the last enzyme in the mitochondrial electron transport chain which drives oxidative phosphorylation. The respiratory chain contains 3 multisubunit complexes succinate dehydrogenase (complex II, CII), ubiquinol-cytochrome c oxidoreductase (cytochrome b-c1 complex, complex III, CIII) and cytochrome c oxidase (complex IV, CIV), that cooperate to transfer electrons derived from NADH and succinate to molecular oxygen, creating an electrochemical gradient over the inner membrane that drives transmembrane transport and the ATP synthase. Cytochrome c oxidase is the component of the respiratory chain that catalyzes the reduction of oxygen to water. Electrons originating from reduced cytochrome c in the intermembrane space (IMS) are transferred via the dinuclear copper A center (CU(A)) of subunit 2 and heme A of subunit 1 to the active site in subunit 1, a binuclear center (BNC) formed by heme A3 and copper B (CU(B)). The BNC reduces molecular oxygen to 2 water molecules using 4 electrons from cytochrome c in the IMS and 4 protons from the mitochondrial matrix. The polypeptide is Cytochrome c oxidase subunit 3 (COIII) (Trypanoplasma borreli).